Consider the following 500-residue polypeptide: MNKFPWLTIIVVLPIFAGSFIFFLPHKGNRVIRWYTICICTLELLLTTYAFCYHFRLDDPLIQLVEDYKWINFFDFRWKLGIDGLSIGPVLLTGFITTLATLAAWPVTRDSRLFHFLMLAMYSGQIGSFSSRDLLLFFIMWELELIPVYLLLSMWGGKKRLYSATKFILYTAGGSIFLLMGVLGVGLYGSNEPTLNFETSVNQSYPVALEIIFYIGFFIAFAVKLPILPLHTWLPDTHGEAHYSTCMLLAGILLKMGAYGLIRINMELLPHAHSIFSPWLMIVGTIQIIYAASTSLGQRNLKKRIAYSSVSHMGFILIGIASITDTGLNGAILQIISHGFIGAALFFLAGTSYDRIRLVYLDEMGGVAIPMPKIFTMFSSFSISSLALPGMSGFVAEVIVFLGIITSQKYLLMPKIVITFVMAIGMILTPIYLLSMSRQMFYGYKLFNIPNSFVFDSGPRELFVSISIFLPVIGIGMYPDFVLSLSVDKVEGILSNYFYR.

14 helical membrane-spanning segments follow: residues phenylalanine 4 to leucine 24, tyrosine 35 to phenylalanine 55, isoleucine 87 to valine 107, leucine 113 to serine 130, leucine 134 to methionine 154, phenylalanine 167 to leucine 187, valine 207 to isoleucine 227, histidine 242 to isoleucine 262, alanine 272 to alanine 292, isoleucine 305 to aspartate 325, glycine 330 to glycine 350, leucine 386 to threonine 406, isoleucine 416 to methionine 436, and leucine 462 to valine 482.

This sequence belongs to the complex I subunit 4 family.

Its subcellular location is the plastid. It is found in the chloroplast thylakoid membrane. The catalysed reaction is a plastoquinone + NADH + (n+1) H(+)(in) = a plastoquinol + NAD(+) + n H(+)(out). It catalyses the reaction a plastoquinone + NADPH + (n+1) H(+)(in) = a plastoquinol + NADP(+) + n H(+)(out). The chain is NAD(P)H-quinone oxidoreductase chain 4, chloroplastic from Guizotia abyssinica (Niger).